The primary structure comprises 405 residues: S-adenosylmethionine sensor upstream of mTORC1 (405 aa).

Residues M1 to E34 are disordered. Basic and acidic residues predominate over residues R25 to E34. Residues R95, G172, D190, D202, F203, and S244 each coordinate S-adenosyl-L-methionine.

This sequence belongs to the BMT2/SAMTOR family. In terms of assembly, interacts with the DEPDC5 subunit of the GATOR1 complex; interaction is disrupted when SAMTOR binds S-adenosyl-L-methionine. Interacts with the KICSTOR complex; interaction is disrupted when SAMTOR binds S-adenosyl-L-methionine.

S-adenosyl-L-methionine-binding protein that acts as an inhibitor of mTORC1 signaling via interaction with the GATOR1 and KICSTOR complexes. Acts as a sensor of S-adenosyl-L-methionine to signal methionine sufficiency to mTORC1: in presence of methionine, binds S-adenosyl-L-methionine, leading to disrupt interaction with the GATOR1 and KICSTOR complexes and promote mTORC1 signaling. Upon methionine starvation, S-adenosyl-L-methionine levels are reduced, thereby promoting the association with GATOR1 and KICSTOR, leading to inhibit mTORC1 signaling. Probably also acts as a S-adenosyl-L-methionine-dependent methyltransferase (Potential). This Homo sapiens (Human) protein is S-adenosylmethionine sensor upstream of mTORC1.